The sequence spans 238 residues: ATP-dependent dethiobiotin synthetase BioD (238 aa).

An ATP-binding site is contributed by 13–18 (DIGKTF). Thr-17 contributes to the Mg(2+) binding site. The active site involves Lys-38. Ser-42 is a substrate binding site. ATP is bound by residues Asp-55, 116–119 (EGSG), 209–211 (PRI), and Asn-216. Positions 55 and 116 each coordinate Mg(2+).

It belongs to the dethiobiotin synthetase family. As to quaternary structure, homodimer. The cofactor is Mg(2+).

The protein resides in the cytoplasm. It carries out the reaction (7R,8S)-7,8-diammoniononanoate + CO2 + ATP = (4R,5S)-dethiobiotin + ADP + phosphate + 3 H(+). It functions in the pathway cofactor biosynthesis; biotin biosynthesis; biotin from 7,8-diaminononanoate: step 1/2. Catalyzes a mechanistically unusual reaction, the ATP-dependent insertion of CO2 between the N7 and N8 nitrogen atoms of 7,8-diaminopelargonic acid (DAPA, also called 7,8-diammoniononanoate) to form a ureido ring. This Clostridium novyi (strain NT) protein is ATP-dependent dethiobiotin synthetase BioD.